Here is a 125-residue protein sequence, read N- to C-terminus: Gem-associated protein 7 (125 aa).

M1 bears the N-acetylmethionine mark. The SUZ-C domain maps to 1 to 29 (MQTPLATPVPVLRLPRGPDGSNRGFAPDG). A disordered region spans residues 1–52 (MQTPLATPVPVLRLPRGPDGSNRGFAPDGRRAPPKPEVPEPPESRESWEQQA). Residue T3 is modified to Phosphothreonine. Positions 59–125 (RYLRSLLAMV…SDIISYTFKP (67 aa)) constitute a Sm domain.

This sequence belongs to the gemin-7 family. In terms of assembly, part of the core SMN complex that contains SMN1, GEMIN2/SIP1, DDX20/GEMIN3, GEMIN4, GEMIN5, GEMIN6, GEMIN7, GEMIN8 and STRAP/UNRIP. Part of the SMN-Sm complex that contains SMN1, GEMIN2/SIP1, DDX20/GEMIN3, GEMIN4, GEMIN5, GEMIN6, GEMIN7, GEMIN8, STRAP/UNRIP and the Sm proteins SNRPB, SNRPD1, SNRPD2, SNRPD3, SNRPE, SNRPF and SNRPG. Interacts with GEMIN6; the interaction is direct. Interacts with STRAP/UNRIP; the interaction is direct. Interacts with GEMIN8; the interaction is direct. Interacts with SNRPB, SNRPD2, SNRPD3 and SNRPE; the interaction is direct.

The protein localises to the nucleus. It is found in the nucleoplasm. It localises to the gem. Its subcellular location is the cytoplasm. Functionally, the SMN complex catalyzes the assembly of small nuclear ribonucleoproteins (snRNPs), the building blocks of the spliceosome, and thereby plays an important role in the splicing of cellular pre-mRNAs. Most spliceosomal snRNPs contain a common set of Sm proteins SNRPB, SNRPD1, SNRPD2, SNRPD3, SNRPE, SNRPF and SNRPG that assemble in a heptameric protein ring on the Sm site of the small nuclear RNA to form the core snRNP (Sm core). In the cytosol, the Sm proteins SNRPD1, SNRPD2, SNRPE, SNRPF and SNRPG are trapped in an inactive 6S pICln-Sm complex by the chaperone CLNS1A that controls the assembly of the core snRNP. To assemble core snRNPs, the SMN complex accepts the trapped 5Sm proteins from CLNS1A forming an intermediate. Binding of snRNA inside 5Sm triggers eviction of the SMN complex, thereby allowing binding of SNRPD3 and SNRPB to complete assembly of the core snRNP. The polypeptide is Gem-associated protein 7 (GEMIN7) (Bos taurus (Bovine)).